A 1253-amino-acid chain; its full sequence is Elongator complex protein 1 (1253 aa).

A mediates dimerization region spans residues 830 to 1253 (VDVNMLFDHA…KPFEKLSILI (424 aa)). Positions 1126-1141 (YTKSSNSSKMTRNTSK) are enriched in polar residues. The disordered stretch occupies residues 1126 to 1153 (YTKSSNSSKMTRNTSKNNRRLERKRARG). Residues 1137–1155 (RNTSKNNRRLERKRARGKK) are required for binding to tRNA. Over residues 1142–1153 (NNRRLERKRARG) the composition is skewed to basic residues.

Belongs to the ELP1/IKA1 family. As to quaternary structure, homodimer. Component of the elongator complex.

It is found in the cytoplasm. The protein operates within tRNA modification; 5-methoxycarbonylmethyl-2-thiouridine-tRNA biosynthesis. In terms of biological role, component of the elongator complex, a multiprotein complex which is required for multiple tRNA modifications, including mcm5U (5-methoxycarbonylmethyl uridine), mcm5s2U (5-methoxycarbonylmethyl-2-thiouridine), and ncm5U (5-carbamoylmethyl uridine). The elongator complex catalyzes formation of carboxymethyluridine in the wobble base at position 34 in tRNAs. ELP1 binds to tRNA, mediating interaction of the elongator complex with tRNA. The chain is Elongator complex protein 1 from Schizosaccharomyces pombe (strain 972 / ATCC 24843) (Fission yeast).